The chain runs to 199 residues: Chromophore lyase CpcT/CpeT (199 aa).

The protein belongs to the CpcT/CpeT biliprotein lyase family.

Functionally, covalently attaches a chromophore to Cys residue(s) of phycobiliproteins. The polypeptide is Chromophore lyase CpcT/CpeT (Prochlorococcus marinus (strain NATL1A)).